The chain runs to 214 residues: Adenylate kinase (214 aa).

Residue 12-17 coordinates ATP; that stretch reads GVGKGT. The NMP stretch occupies residues 32–61; the sequence is STGNIFRSQIASNSELGIKLKEIVESGGYV. AMP contacts are provided by residues T33, R38, 59 to 61, 88 to 91, and Q95; these read GYV and GYPR. Residues 126–163 are LID; it reads GRRICPSCNAQYHIYFKKSKLDTKCEIDQSELIQRKDD. R127 contributes to the ATP binding site. The Zn(2+) site is built by C130, C133, C150, and D153. Positions 160 and 171 each coordinate AMP. Residue K199 coordinates ATP.

The protein belongs to the adenylate kinase family. In terms of assembly, monomer.

It is found in the cytoplasm. It catalyses the reaction AMP + ATP = 2 ADP. It participates in purine metabolism; AMP biosynthesis via salvage pathway; AMP from ADP: step 1/1. Catalyzes the reversible transfer of the terminal phosphate group between ATP and AMP. Plays an important role in cellular energy homeostasis and in adenine nucleotide metabolism. This Mycoplasmopsis pulmonis (strain UAB CTIP) (Mycoplasma pulmonis) protein is Adenylate kinase.